The sequence spans 277 residues: S-formylglutathione hydrolase FrmB (277 aa).

Active-site charge relay system residues include serine 145, aspartate 221, and histidine 254.

The protein belongs to the esterase D family.

The catalysed reaction is S-formylglutathione + H2O = formate + glutathione + H(+). Functionally, serine hydrolase involved in the detoxification of formaldehyde. Hydrolyzes S-formylglutathione to glutathione and formate. This chain is S-formylglutathione hydrolase FrmB (frmB), found in Escherichia coli O9:H4 (strain HS).